Consider the following 768-residue polypeptide: Phosphoribosylformylglycinamidine synthase subunit PurL (768 aa).

The active site involves H48. 2 residues coordinate ATP: Y51 and K90. Residue E92 coordinates Mg(2+). Substrate-binding positions include 93-96 (SHNH) and R115. H94 serves as the catalytic Proton acceptor. Residue D116 coordinates Mg(2+). Substrate is bound at residue Q239. D267 is a Mg(2+) binding site. Residue 311–313 (ESQ) participates in substrate binding. 2 residues coordinate ATP: D507 and G544. Mg(2+) is bound at residue N545. Residue S547 coordinates substrate.

This sequence belongs to the FGAMS family. Monomer. Part of the FGAM synthase complex composed of 1 PurL, 1 PurQ and 2 PurS subunits.

It is found in the cytoplasm. It catalyses the reaction N(2)-formyl-N(1)-(5-phospho-beta-D-ribosyl)glycinamide + L-glutamine + ATP + H2O = 2-formamido-N(1)-(5-O-phospho-beta-D-ribosyl)acetamidine + L-glutamate + ADP + phosphate + H(+). It functions in the pathway purine metabolism; IMP biosynthesis via de novo pathway; 5-amino-1-(5-phospho-D-ribosyl)imidazole from N(2)-formyl-N(1)-(5-phospho-D-ribosyl)glycinamide: step 1/2. Its function is as follows. Part of the phosphoribosylformylglycinamidine synthase complex involved in the purines biosynthetic pathway. Catalyzes the ATP-dependent conversion of formylglycinamide ribonucleotide (FGAR) and glutamine to yield formylglycinamidine ribonucleotide (FGAM) and glutamate. The FGAM synthase complex is composed of three subunits. PurQ produces an ammonia molecule by converting glutamine to glutamate. PurL transfers the ammonia molecule to FGAR to form FGAM in an ATP-dependent manner. PurS interacts with PurQ and PurL and is thought to assist in the transfer of the ammonia molecule from PurQ to PurL. The protein is Phosphoribosylformylglycinamidine synthase subunit PurL of Parasynechococcus marenigrum (strain WH8102).